A 316-amino-acid chain; its full sequence is Ferrochelatase (316 aa).

Residues His190 and Glu271 each coordinate Fe cation.

It belongs to the ferrochelatase family.

The protein localises to the cytoplasm. The catalysed reaction is heme b + 2 H(+) = protoporphyrin IX + Fe(2+). It participates in porphyrin-containing compound metabolism; protoheme biosynthesis; protoheme from protoporphyrin-IX: step 1/1. Catalyzes the ferrous insertion into protoporphyrin IX. The protein is Ferrochelatase of Sulfurimonas denitrificans (strain ATCC 33889 / DSM 1251) (Thiomicrospira denitrificans (strain ATCC 33889 / DSM 1251)).